Here is a 295-residue protein sequence, read N- to C-terminus: G1/S-specific cyclin-D1 (295 aa).

The region spanning 28-152 is the Cyclin N-terminal domain; that stretch reads LRAMLKTEET…LLVNKLKWNL (125 aa). The interval 262 to 283 is disordered; sequence AQQNVDPKATEEEGEVEEEAGL. Lys269 participates in a covalent cross-link: Glycyl lysine isopeptide (Lys-Gly) (interchain with G-Cter in ubiquitin). Thr286 carries the post-translational modification Phosphothreonine.

The protein belongs to the cyclin family. Cyclin D subfamily. As to quaternary structure, interacts with either CDK4 or CDK6 protein kinase to form a serine/threonine kinase holoenzyme complex. The cyclin subunit imparts substrate specificity to the complex. Component of the ternary complex CCND1/CDK4/CDKN1B required for nuclear translocation and modulation of CDK4-mediated kinase activity. Interacts directly with CDKN1B. Can form similar complexes with either CDKN1A or CDKN2A. Interacts with UHRF2; the interaction ubiquitinates CCND1 and appears to occur independently of phosphorylation. Interacts with USP2. Interacts (via cyclin N-terminal domain) with INSM1 (via N-terminal region); the interaction competes with the binding of CCND1 to CDK4 during cell cycle progression and inhibits CDK4 activity. Interacts with CDK4; the interaction is prevented with the binding of CCND1 to INSM1 during cell cycle progression. Phosphorylation at Thr-286 by MAP kinases is required for ubiquitination and degradation by the DCX(AMBRA1) complex. It also plays an essential role for recognition by the FBXO31 component of SCF (SKP1-cullin-F-box) protein ligase complex following DNA damage. Post-translationally, ubiquitinated at Lys-269 by the DCX(AMBRA1) complex during the transition from G1 to S cell phase, leading to its degradation: ubiquitination is dependent on Thr-286 phosphorylation. The DCX(AMBRA1) complex represents the major regulator of CCND1 stability during the G1/S transition. Also ubiquitinated by the SCF(FBXO4) and Cul7-RING(FBXW8) ubiquitin-protein ligase complexes. Following DNA damage it is ubiquitinated by the SCF(FBXO31) protein ligase complex. SCF(FBXO31) ubiquitination is dependent on Thr-286 phosphorylation. Ubiquitinated also by UHRF2 apparently in a phosphorylation-independent manner. Ubiquitination leads to its degradation and G1 arrest. Deubiquitinated by USP2; leading to its stabilization. In terms of tissue distribution, expressed in the intestinal epithelium.

It localises to the nucleus. It is found in the cytoplasm. Its subcellular location is the nucleus membrane. Regulatory component of the cyclin D1-CDK4 (DC) complex that phosphorylates and inhibits members of the retinoblastoma (RB) protein family including RB1 and regulates the cell-cycle during G(1)/S transition. Phosphorylation of RB1 allows dissociation of the transcription factor E2F from the RB/E2F complex and the subsequent transcription of E2F target genes which are responsible for the progression through the G(1) phase. Hypophosphorylates RB1 in early G(1) phase. Cyclin D-CDK4 complexes are major integrators of various mitogenenic and antimitogenic signals. Also a substrate for SMAD3, phosphorylating SMAD3 in a cell-cycle-dependent manner and repressing its transcriptional activity. Component of the ternary complex, cyclin D1/CDK4/CDKN1B, required for nuclear translocation and activity of the cyclin D-CDK4 complex. Exhibits transcriptional corepressor activity with INSM1 on the NEUROD1 and INS promoters in a cell cycle-independent manner. The polypeptide is G1/S-specific cyclin-D1 (Ccnd1) (Mus musculus (Mouse)).